The chain runs to 77 residues: U8-lycotoxin-Ls1t (77 aa).

Residues 1–20 (MKLIIFTGLVPFAIVSLIEA) form the signal peptide. A propeptide spanning residues 21–26 (QAENEK) is cleaved from the precursor.

This sequence belongs to the neurotoxin 19 (CSTX) family. 08 (U8-Lctx) subfamily. Post-translationally, contains 4 disulfide bonds. In terms of tissue distribution, expressed by the venom gland.

It localises to the secreted. This is U8-lycotoxin-Ls1t from Lycosa singoriensis (Wolf spider).